Reading from the N-terminus, the 477-residue chain is Xylose isomerase (477 aa).

His142 is a catalytic residue. Positions 273, 309, 312, 337, 348, 350, and 380 each coordinate Mn(2+).

This sequence belongs to the xylose isomerase family. Mn(2+) is required as a cofactor.

It catalyses the reaction alpha-D-xylose = alpha-D-xylulofuranose. This is Xylose isomerase (XYLA) from Arabidopsis thaliana (Mouse-ear cress).